The primary structure comprises 394 residues: LL-diaminopimelate aminotransferase (394 aa).

Residues tyrosine 14 and glycine 41 each coordinate substrate. Pyridoxal 5'-phosphate contacts are provided by residues tyrosine 71, 104-105, tyrosine 128, asparagine 174, tyrosine 205, and 233-235; these read AK and SFS. Residues lysine 105, tyrosine 128, and asparagine 174 each coordinate substrate. At lysine 236 the chain carries N6-(pyridoxal phosphate)lysine. Residues arginine 244 and asparagine 275 each contribute to the pyridoxal 5'-phosphate site. Residues asparagine 275 and arginine 369 each coordinate substrate.

Belongs to the class-I pyridoxal-phosphate-dependent aminotransferase family. LL-diaminopimelate aminotransferase subfamily. As to quaternary structure, homodimer. It depends on pyridoxal 5'-phosphate as a cofactor.

It catalyses the reaction (2S,6S)-2,6-diaminopimelate + 2-oxoglutarate = (S)-2,3,4,5-tetrahydrodipicolinate + L-glutamate + H2O + H(+). Its pathway is amino-acid biosynthesis; L-lysine biosynthesis via DAP pathway; LL-2,6-diaminopimelate from (S)-tetrahydrodipicolinate (aminotransferase route): step 1/1. Functionally, involved in the synthesis of meso-diaminopimelate (m-DAP or DL-DAP), required for both lysine and peptidoglycan biosynthesis. Catalyzes the direct conversion of tetrahydrodipicolinate to LL-diaminopimelate. The polypeptide is LL-diaminopimelate aminotransferase (Chlamydia trachomatis serovar L2b (strain UCH-1/proctitis)).